A 317-amino-acid chain; its full sequence is Putative HTH-type transcriptional regulatory protein TGAM_1316 (317 aa).

The HTH cro/C1-type domain occupies 131–189 (LKKLREKHGYSVGELASLLGVSRKSLLNYERNEQAVSLEVALRMEELFDEPIAEPIDVL). Positions 142 to 161 (VGELASLLGVSRKSLLNYER) form a DNA-binding region, H-T-H motif.

This Thermococcus gammatolerans (strain DSM 15229 / JCM 11827 / EJ3) protein is Putative HTH-type transcriptional regulatory protein TGAM_1316.